We begin with the raw amino-acid sequence, 317 residues long: HTH-type transcriptional regulator MetR (317 aa).

The 59-residue stretch at 1–59 folds into the HTH lysR-type domain; sequence MIEVKHLKTLQALRNCGSLAAAAATLHQTQSALSHQFSDLEQRLGFRLFVRKSQPLRFT. The segment at residues 19–38 is a DNA-binding region (H-T-H motif); it reads LAAAAATLHQTQSALSHQFS.

Belongs to the LysR transcriptional regulatory family.

Its subcellular location is the cytoplasm. Functionally, control of the last step in methionine biosynthesis; MetR is a positive activator of the metA, metE and metH genes. It is also a negative regulator of its own expression. This chain is HTH-type transcriptional regulator MetR (metR), found in Escherichia coli O157:H7.